A 281-amino-acid polypeptide reads, in one-letter code: NADPH-dependent 7-cyano-7-deazaguanine reductase (281 aa).

88 to 90 is a binding site for substrate; sequence IES. 90-91 is an NADPH binding site; it reads SK. Cysteine 189 functions as the Thioimide intermediate in the catalytic mechanism. Catalysis depends on aspartate 196, which acts as the Proton donor. Residue 228–229 coordinates substrate; that stretch reads HE. 257-258 serves as a coordination point for NADPH; sequence RG.

It belongs to the GTP cyclohydrolase I family. QueF type 2 subfamily. As to quaternary structure, homodimer.

The protein resides in the cytoplasm. The enzyme catalyses 7-aminomethyl-7-carbaguanine + 2 NADP(+) = 7-cyano-7-deazaguanine + 2 NADPH + 3 H(+). It functions in the pathway tRNA modification; tRNA-queuosine biosynthesis. Functionally, catalyzes the NADPH-dependent reduction of 7-cyano-7-deazaguanine (preQ0) to 7-aminomethyl-7-deazaguanine (preQ1). The chain is NADPH-dependent 7-cyano-7-deazaguanine reductase from Yersinia enterocolitica serotype O:8 / biotype 1B (strain NCTC 13174 / 8081).